Here is a 185-residue protein sequence, read N- to C-terminus: Ribosome-recycling factor (185 aa).

It belongs to the RRF family.

The protein localises to the cytoplasm. Responsible for the release of ribosomes from messenger RNA at the termination of protein biosynthesis. May increase the efficiency of translation by recycling ribosomes from one round of translation to another. The sequence is that of Ribosome-recycling factor from Halalkalibacterium halodurans (strain ATCC BAA-125 / DSM 18197 / FERM 7344 / JCM 9153 / C-125) (Bacillus halodurans).